The following is a 286-amino-acid chain: ATP synthase gamma chain (286 aa).

Belongs to the ATPase gamma chain family. In terms of assembly, F-type ATPases have 2 components, CF(1) - the catalytic core - and CF(0) - the membrane proton channel. CF(1) has five subunits: alpha(3), beta(3), gamma(1), delta(1), epsilon(1). CF(0) has three main subunits: a, b and c.

The protein resides in the cell membrane. In terms of biological role, produces ATP from ADP in the presence of a proton gradient across the membrane. The gamma chain is believed to be important in regulating ATPase activity and the flow of protons through the CF(0) complex. The sequence is that of ATP synthase gamma chain from Bacillus cereus (strain G9842).